The primary structure comprises 122 residues: Large ribosomal subunit protein uL14 (122 aa).

This sequence belongs to the universal ribosomal protein uL14 family. In terms of assembly, part of the 50S ribosomal subunit. Forms a cluster with proteins L3 and L19. In the 70S ribosome, L14 and L19 interact and together make contacts with the 16S rRNA in bridges B5 and B8.

Its function is as follows. Binds to 23S rRNA. Forms part of two intersubunit bridges in the 70S ribosome. The sequence is that of Large ribosomal subunit protein uL14 from Myxococcus xanthus (strain DK1622).